A 408-amino-acid polypeptide reads, in one-letter code: UV excision repair protein RAD23 homolog B (408 aa).

The Ubiquitin-like domain occupies 1 to 79 (MLVTLKTLQQ…VVVMVTKPKA (79 aa)). Low complexity predominate over residues 80-111 (VTTPAPATTQQSNSAATTTVSSSTAPAVTQAP). Residues 80–176 (VTTPAPATTQ…TSGDSSRSNL (97 aa)) form a disordered region. The span at 112–122 (APAPASAPTPT) shows a compositional bias: pro residues. Low complexity predominate over residues 123–143 (PVSVTPAPTTASSEPAPASAA). Residues 144–153 (KQEKPAERPV) are compositionally biased toward basic and acidic residues. The span at 154-174 (ETPVATTPTSTDSTSGDSSRS) shows a compositional bias: low complexity. Phosphothreonine is present on residues Thr155 and Thr164. Ser174 carries the phosphoserine modification. Thr186 bears the Phosphothreonine mark. A UBA 1 domain is found at 188–228 (QSYENMVTEIMSMGYEREQVIAALRASFNNPDRAVEYLLMG). Ser199 bears the Phosphoserine mark. Tyr202 carries the phosphotyrosine modification. Residues 236–274 (QAVVDPPPAASTGAPQSSVAAAAATTTATTTTTSSGGHP) are disordered. Residues 255–268 (AAAAATTTATTTTT) are compositionally biased toward low complexity. In terms of domain architecture, STI1 spans 273-316 (HPLEFLRNQPQFQQMRQIIQQNPSLLPALLQQIGRENPQLLQQI). One can recognise a UBA 2 domain in the interval 363–403 (PQEKEAIERLKALGFPEGLVIQAYFACEKNENLAANFLLQQ).

Belongs to the RAD23 family. Component of the XPC complex composed of XPC, RAD23B and CETN2. Interacts with NGLY1 and PSMC1. Interacts with ATXN3. Interacts with PSMD4 and PSMC5. Interacts with AMFR. Interacts with VCP; the interaction is indirect and mediated by NGLY1.

Its subcellular location is the nucleus. The protein localises to the cytoplasm. Its function is as follows. Multiubiquitin chain receptor involved in modulation of proteasomal degradation. Binds to polyubiquitin chains. Proposed to be capable to bind simultaneously to the 26S proteasome and to polyubiquitinated substrates and to deliver ubiquitinated proteins to the proteasome. May play a role in endoplasmic reticulum-associated degradation (ERAD) of misfolded glycoproteins by association with PNGase and delivering deglycosylated proteins to the proteasome. In terms of biological role, involved in global genome nucleotide excision repair (GG-NER) by acting as component of the XPC complex. Cooperatively with CETN2 appears to stabilize XPC. May protect XPC from proteasomal degradation. Functionally, the XPC complex is proposed to represent the first factor bound at the sites of DNA damage and together with other core recognition factors, XPA, RPA and the TFIIH complex, is part of the pre-incision (or initial recognition) complex. The XPC complex recognizes a wide spectrum of damaged DNA characterized by distortions of the DNA helix such as single-stranded loops, mismatched bubbles or single-stranded overhangs. The orientation of XPC complex binding appears to be crucial for inducing a productive NER. XPC complex is proposed to recognize and to interact with unpaired bases on the undamaged DNA strand which is followed by recruitment of the TFIIH complex and subsequent scanning for lesions in the opposite strand in a 5'-to-3' direction by the NER machinery. Cyclobutane pyrimidine dimers (CPDs) which are formed upon UV-induced DNA damage esacpe detection by the XPC complex due to a low degree of structural perurbation. Instead they are detected by the UV-DDB complex which in turn recruits and cooperates with the XPC complex in the respective DNA repair. In vitro, the XPC:RAD23B dimer is sufficient to initiate NER; it preferentially binds to cisplatin and UV-damaged double-stranded DNA and also binds to a variety of chemically and structurally diverse DNA adducts. XPC:RAD23B contacts DNA both 5' and 3' of a cisplatin lesion with a preference for the 5' side. XPC:RAD23B induces a bend in DNA upon binding. XPC:RAD23B stimulates the activity of DNA glycosylases TDG and SMUG1. This chain is UV excision repair protein RAD23 homolog B (RAD23B), found in Bos taurus (Bovine).